An 839-amino-acid chain; its full sequence is ATP-binding cassette sub-family F member 1 (839 aa).

Residues 1-258 (MPKGPKQQPP…KKEKKKLKKQ (258 aa)) are disordered. S22 is modified (phosphoserine). The span at 29–39 (KKGKKDKKTKK) shows a compositional bias: basic residues. Basic and acidic residues predominate over residues 47-64 (VEDKQAGEEEKLQKEKEQ). Residues 71–83 (QKKKRDTRKGRRK) show a composition bias toward basic residues. Phosphoserine is present on residues S105, S109, and S140. The segment covering 136 to 149 (IQDESEEEKEEEEE) has biased composition (acidic residues). The segment covering 150–162 (KPVLKPAKPEKNR) has biased composition (basic and acidic residues). Phosphothreonine is present on T195. Position 197 is a phosphoserine (S197). The segment covering 206–223 (TKEKEPPRPGKDKDKKGA) has biased composition (basic and acidic residues). S227 is subject to Phosphoserine. The segment covering 247–256 (LSKKEKKKLK) has biased composition (basic residues). One can recognise an ABC transporter 1 domain in the interval 298–542 (IKLEKFSISA…MYQQKQKELL (245 aa)). 330–337 (GPNGKGKT) contacts ATP. Positions 553–574 (KELKAGGKSTKQAEKQTKEVLT) are enriched in basic and acidic residues. Positions 553–600 (KELKAGGKSTKQAEKQTKEVLTRKQQKCRRKNQDEESQDPPELLKRPR) are disordered. Position 589 is a phosphoserine (S589). Residues 619-834 (LGLHGVTFGY…VLEALGEVMV (216 aa)) enclose the ABC transporter 2 domain. 652 to 659 (GPNGVGKS) serves as a coordination point for ATP.

Interacts (via N-terminus) with EIF2S1; the interaction is independent of its phosphorylated status. Associates (via both ABC transporter domains) with the ribosomes. Phosphorylated at phosphoserine and phosphothreonine. Phosphorylation on Ser-109 and Ser-140 by CK2; inhibits association of EIF2 with ribosomes.

The protein localises to the cytoplasm. The protein resides in the nucleus. It is found in the nucleoplasm. It localises to the nucleus envelope. Its function is as follows. Required for efficient Cap- and IRES-mediated mRNA translation initiation. Not involved in the ribosome biogenesis. This chain is ATP-binding cassette sub-family F member 1 (Abcf1), found in Rattus norvegicus (Rat).